The sequence spans 856 residues: DNA mismatch repair protein MutS (856 aa).

An ATP-binding site is contributed by 615 to 622; sequence GPNMGGKS. Residues 798 to 807 show a composition bias toward polar residues; it reads ETTGHQQAIK. The interval 798-817 is disordered; sequence ETTGHQQAIKNPSKAPREEQ.

It belongs to the DNA mismatch repair MutS family.

Functionally, this protein is involved in the repair of mismatches in DNA. It is possible that it carries out the mismatch recognition step. This protein has a weak ATPase activity. The chain is DNA mismatch repair protein MutS from Photobacterium profundum (strain SS9).